The sequence spans 105 residues: Met repressor (105 aa).

It belongs to the MetJ family. In terms of assembly, homodimer.

The protein localises to the cytoplasm. In terms of biological role, this regulatory protein, when combined with SAM (S-adenosylmethionine) represses the expression of the methionine regulon and of enzymes involved in SAM synthesis. The chain is Met repressor from Yersinia enterocolitica serotype O:8 / biotype 1B (strain NCTC 13174 / 8081).